Reading from the N-terminus, the 333-residue chain is tRNA-modifying protein YgfZ (333 aa).

2 residues coordinate folate: Trp33 and Trp195.

Belongs to the tRNA-modifying YgfZ family.

The protein resides in the cytoplasm. In terms of biological role, folate-binding protein involved in regulating the level of ATP-DnaA and in the modification of some tRNAs. It is probably a key factor in regulatory networks that act via tRNA modification, such as initiation of chromosomal replication. This chain is tRNA-modifying protein YgfZ, found in Pectobacterium atrosepticum (strain SCRI 1043 / ATCC BAA-672) (Erwinia carotovora subsp. atroseptica).